Consider the following 247-residue polypeptide: Cytochrome c oxidase subunit 2 (247 aa).

The Mitochondrial intermembrane portion of the chain corresponds to Asp-12–Asn-38. A helical membrane pass occupies residues Ile-39 to Lys-59. Over Asp-60–Glu-78 the chain is Mitochondrial matrix. Residues Ile-79–Tyr-101 traverse the membrane as a helical segment. Residues Leu-102 to Gln-247 are Mitochondrial intermembrane-facing. Residues His-182, Cys-217, Glu-219, Cys-221, His-225, and Met-228 each coordinate Cu cation. Glu-219 contacts Mg(2+).

This sequence belongs to the cytochrome c oxidase subunit 2 family. As to quaternary structure, component of the cytochrome c oxidase (complex IV, CIV), a multisubunit enzyme composed of a catalytic core of 3 subunits and several supernumerary subunits. The complex exists as a monomer or a dimer and forms supercomplexes (SCs) in the inner mitochondrial membrane with ubiquinol-cytochrome c oxidoreductase (cytochrome b-c1 complex, complex III, CIII). Cu cation is required as a cofactor. In terms of processing, the signal sequence of COX2 is processed by IMP1.

The protein localises to the mitochondrion inner membrane. The catalysed reaction is 4 Fe(II)-[cytochrome c] + O2 + 8 H(+)(in) = 4 Fe(III)-[cytochrome c] + 2 H2O + 4 H(+)(out). Functionally, component of the cytochrome c oxidase, the last enzyme in the mitochondrial electron transport chain which drives oxidative phosphorylation. The respiratory chain contains 3 multisubunit complexes succinate dehydrogenase (complex II, CII), ubiquinol-cytochrome c oxidoreductase (cytochrome b-c1 complex, complex III, CIII) and cytochrome c oxidase (complex IV, CIV), that cooperate to transfer electrons derived from NADH and succinate to molecular oxygen, creating an electrochemical gradient over the inner membrane that drives transmembrane transport and the ATP synthase. Cytochrome c oxidase is the component of the respiratory chain that catalyzes the reduction of oxygen to water. Electrons originating from reduced cytochrome c in the intermembrane space (IMS) are transferred via the dinuclear copper A center (CU(A)) of subunit 2 and heme A of subunit 1 to the active site in subunit 1, a binuclear center (BNC) formed by heme A3 and copper B (CU(B)). The BNC reduces molecular oxygen to 2 water molecules using 4 electrons from cytochrome c in the IMS and 4 protons from the mitochondrial matrix. This is Cytochrome c oxidase subunit 2 (COX2) from Cyberlindnera mrakii (Yeast).